A 317-amino-acid chain; its full sequence is Putative HTH-type transcriptional regulatory protein Mboo_0195 (317 aa).

In terms of domain architecture, HTH cro/C1-type spans 132–185; the sequence is LRELRERRSMSLGDLGQVLGVSRRTISKYESGMGTTLEVAIRIEEYFNTGVVES. A DNA-binding region (H-T-H motif) is located at residues 143–162; the sequence is LGDLGQVLGVSRRTISKYES.

In Methanoregula boonei (strain DSM 21154 / JCM 14090 / 6A8), this protein is Putative HTH-type transcriptional regulatory protein Mboo_0195.